The chain runs to 597 residues: Cytosolic phospholipase A2 gamma (597 aa).

One can recognise a PLA2c domain in the interval 1 to 597; sequence MELSSGVCPA…FKKSHNISKD (597 aa). The active-site Nucleophile is the Ser-83. Catalysis depends on Asp-417, which acts as the Proton acceptor. The interval 576–597 is disordered; sequence RVKDPQGSQTVEFKKSHNISKD. The segment covering 587 to 597 has biased composition (basic and acidic residues); it reads EFKKSHNISKD.

In terms of tissue distribution, highly expressed in ovary, where it localizes to oocytes in preantral and antral stage follicles (at protein level). Not detected in other tissues tested.

It localises to the nucleus. The protein resides in the nucleoplasm. It is found in the nucleus envelope. Its subcellular location is the cytoplasm. The protein localises to the cell cortex. It localises to the cytoskeleton. The protein resides in the spindle. The catalysed reaction is a 1,2-diacyl-sn-glycero-3-phosphocholine + H2O = a 1-acyl-sn-glycero-3-phosphocholine + a fatty acid + H(+). The enzyme catalyses a 1-O-alkyl-2-acyl-sn-glycero-3-phosphocholine + H2O = a 1-O-alkyl-sn-glycero-3-phosphocholine + a fatty acid + H(+). It carries out the reaction 1,2-dihexadecanoyl-sn-glycero-3-phosphocholine + H2O = 1-hexadecanoyl-sn-glycero-3-phosphocholine + hexadecanoate + H(+). It catalyses the reaction 1-hexadecanoyl-2-(9Z-octadecenoyl)-sn-glycero-3-phosphocholine + H2O = 1-hexadecanoyl-sn-glycero-3-phosphocholine + (9Z)-octadecenoate + H(+). The catalysed reaction is 1-hexadecanoyl-2-(9Z,12Z-octadecadienoyl)-sn-glycero-3-phosphocholine + H2O = (9Z,12Z)-octadecadienoate + 1-hexadecanoyl-sn-glycero-3-phosphocholine + H(+). The enzyme catalyses 1-hexadecanoyl-2-(5Z,8Z,11Z,14Z-eicosatetraenoyl)-sn-glycero-3-phosphocholine + H2O = 1-hexadecanoyl-sn-glycero-3-phosphocholine + (5Z,8Z,11Z,14Z)-eicosatetraenoate + H(+). It carries out the reaction 1-O-hexadecyl-2-(5Z,8Z,11Z,14Z)-eicosatetraenoyl-sn-glycero-3-phosphocholine + H2O = 1-O-hexadecyl-sn-glycero-3-phosphocholine + (5Z,8Z,11Z,14Z)-eicosatetraenoate + H(+). It catalyses the reaction 1-hexadecanoyl-2-(5Z,8Z,11Z,14Z-eicosatetraenoyl)-sn-glycero-3-phosphocholine + H2O = 2-(5Z,8Z,11Z,14Z)-eicosatetraenoyl-sn-glycero-3-phosphocholine + hexadecanoate + H(+). The catalysed reaction is a 1-acyl-sn-glycero-3-phosphocholine + H2O = sn-glycerol 3-phosphocholine + a fatty acid + H(+). The enzyme catalyses 1-hexadecanoyl-sn-glycero-3-phosphocholine + H2O = sn-glycerol 3-phosphocholine + hexadecanoate + H(+). It carries out the reaction 2 1-hexadecanoyl-sn-glycero-3-phosphocholine = 1,2-dihexadecanoyl-sn-glycero-3-phosphocholine + sn-glycerol 3-phosphocholine. It catalyses the reaction 1-hexadecanoyl-sn-glycero-3-phosphoethanolamine + 1-hexadecanoyl-sn-glycero-3-phosphocholine = 1,2-dihexadecanoyl-sn-glycero-3-phosphoethanolamine + sn-glycerol 3-phosphocholine. The catalysed reaction is 1-hexadecanoyl-sn-glycero-3-phosphoethanolamine + 1-hexadecanoyl-sn-glycero-3-phosphocholine = sn-glycero-3-phosphoethanolamine + 1,2-dihexadecanoyl-sn-glycero-3-phosphocholine. The enzyme catalyses 2 1-hexadecanoyl-sn-glycero-3-phosphoethanolamine = 1,2-dihexadecanoyl-sn-glycero-3-phosphoethanolamine + sn-glycero-3-phosphoethanolamine. It carries out the reaction 1-O-hexadecyl-sn-glycero-3-phosphocholine + 1-hexadecanoyl-sn-glycero-3-phosphocholine = 1-O-hexadecyl-2-hexadecanoyl-sn-glycero-3-phosphocholine + sn-glycerol 3-phosphocholine. It catalyses the reaction a 1-O-(1Z-alkenyl)-sn-glycero-3-phosphoethanolamine + 1-hexadecanoyl-sn-glycero-3-phosphocholine = 1-O-(1Z)-alkenyl-2-hexadecanoyl-sn-glycero-3-phosphoethanolamine + sn-glycerol 3-phosphocholine. The catalysed reaction is 1-O-hexadecyl-sn-glycero-3-phosphocholine + 1-hexadecanoyl-sn-glycero-3-phosphoethanolamine = 1-O-hexadecyl-2-hexadecanoyl-sn-glycero-3-phosphocholine + sn-glycero-3-phosphoethanolamine. The enzyme catalyses 1-octadecanoyl-2-(5Z,8Z,11Z,14Z)-eicosatetraenoyl-sn-glycero-3-phosphoethanolamine + 1-hexadecanoyl-sn-glycero-3-phosphocholine = 1-octadecanoyl-sn-glycero-3-phosphoethanolamine + 1-hexadecanoyl-2-(5Z,8Z,11Z,14Z-eicosatetraenoyl)-sn-glycero-3-phosphocholine. It carries out the reaction 1-octadecanoyl-2-(5Z,8Z,11Z,14Z)-eicosatetraenoyl-sn-glycero-3-phosphoethanolamine + 1-O-hexadecyl-sn-glycero-3-phosphocholine = 1-octadecanoyl-sn-glycero-3-phosphoethanolamine + 1-O-hexadecyl-2-(5Z,8Z,11Z,14Z)-eicosatetraenoyl-sn-glycero-3-phosphocholine. It catalyses the reaction 1-hexadecanoyl-2-(9Z,12Z-octadecadienoyl)-sn-glycero-3-phosphocholine + a 1-O-(1Z-alkenyl)-sn-glycero-3-phosphoethanolamine = 1-O-(1Z-alkenyl)-2-(9Z,12Z-octadecadienoyl)-sn-glycero-3-phosphoethanolamine + 1-hexadecanoyl-sn-glycero-3-phosphocholine. The catalysed reaction is 1-hexadecanoyl-2-(5Z,8Z,11Z,14Z-eicosatetraenoyl)-sn-glycero-3-phosphocholine + a 1-O-(1Z-alkenyl)-sn-glycero-3-phosphoethanolamine = 1-O-(1Z)-alkenyl-2-(5Z,8Z,11Z,14Z)-eicosatetraenoyl-sn-glycero-3-phosphoethanolamine + 1-hexadecanoyl-sn-glycero-3-phosphocholine. Functionally, calcium-independent phospholipase, lysophospholipase and O-acyltransferase involved in phospholipid remodeling. Preferentially hydrolyzes the ester bond of the fatty acyl group attached at sn-2 position of phospholipids with choline and ethanolamine head groups, producing lysophospholipids that are used in deacylation-reacylation cycles. Transfers the sn-1 fatty acyl from one lysophospholipid molecule to the sn-2 position of another lysophospholipid to form diacyl, alkylacyl and alkenylacyl glycerophospholipids. Cleaves ester bonds but not alkyl or alkenyl ether bonds at the sn-1 position of lysophospholipids. Catalyzes sn-2 fatty acyl transfer from phospholipids to the sn-2 position of 1-O-alkyl or 1-O-alkenyl lysophospholipids with lower efficiency. This chain is Cytosolic phospholipase A2 gamma, found in Mus musculus (Mouse).